Reading from the N-terminus, the 527-residue chain is Putative adhesin P1-like protein MPN_500 (527 aa).

Disordered stretches follow at residues 1-26 (MDDI…GSRS), 76-148 (GWRN…LTNY), 248-269 (ASGS…PEQS), and 468-527 (FGTD…VSGH). Positions 9-26 (TSAGSSSGTSTNTSGSRS) are enriched in low complexity. Positions 82–95 (TTSGSTGNANDTKF) are enriched in polar residues. The segment covering 108–117 (SSGTNTSAGN) has biased composition (low complexity). Residues 128 to 148 (QNGQVKTSVQEATSGDNLTNY) show a composition bias toward polar residues. The segment covering 248–262 (ASGSGSNTTSSPGIG) has biased composition (low complexity). The segment covering 468–495 (FGTDHSTQPQPQSLKTTTPVFGRSSGNL) has biased composition (polar residues). The span at 500–513 (SGGGAGGGSSGSGQ) shows a compositional bias: gly residues.

This sequence belongs to the adhesin P1 family.

In Mycoplasma pneumoniae (strain ATCC 29342 / M129 / Subtype 1) (Mycoplasmoides pneumoniae), this protein is Putative adhesin P1-like protein MPN_500.